A 480-amino-acid polypeptide reads, in one-letter code: Aspartyl/glutamyl-tRNA(Asn/Gln) amidotransferase subunit B (480 aa).

It belongs to the GatB/GatE family. GatB subfamily. As to quaternary structure, heterotrimer of A, B and C subunits.

The catalysed reaction is L-glutamyl-tRNA(Gln) + L-glutamine + ATP + H2O = L-glutaminyl-tRNA(Gln) + L-glutamate + ADP + phosphate + H(+). It carries out the reaction L-aspartyl-tRNA(Asn) + L-glutamine + ATP + H2O = L-asparaginyl-tRNA(Asn) + L-glutamate + ADP + phosphate + 2 H(+). Functionally, allows the formation of correctly charged Asn-tRNA(Asn) or Gln-tRNA(Gln) through the transamidation of misacylated Asp-tRNA(Asn) or Glu-tRNA(Gln) in organisms which lack either or both of asparaginyl-tRNA or glutaminyl-tRNA synthetases. The reaction takes place in the presence of glutamine and ATP through an activated phospho-Asp-tRNA(Asn) or phospho-Glu-tRNA(Gln). The polypeptide is Aspartyl/glutamyl-tRNA(Asn/Gln) amidotransferase subunit B (Hahella chejuensis (strain KCTC 2396)).